Here is a 408-residue protein sequence, read N- to C-terminus: Menaquinone reductase (408 aa).

FAD is bound by residues 13–17, 46–49, R103, A127, D290, and 302–303; these read GAGPA, CGDG, and GI.

The protein belongs to the geranylgeranyl reductase family. The cofactor is FAD.

It carries out the reaction menaquinone-9 + AH2 = beta-dihydromenaquinone-9 + A. It participates in quinol/quinone metabolism; menaquinone biosynthesis. Catalyzes the reduction of a single double bond in the isoprenoid tail of menaquinone (MK-9) in M.tuberculosis, likely the beta-isoprene unit, forming the predominant form of menaquinone found in mycobacteria, MK-9(II-H2). The protein is Menaquinone reductase of Mycobacterium tuberculosis (strain CDC 1551 / Oshkosh).